The primary structure comprises 502 residues: MSLRRRKRASPTDLYKTCLQGGDCIPDVKNKFENSTIADWLLKIFGSLVYFGNLGIGSGKGSGGSFGYRPLGSAGSGRPATDLPVTRPNVVIEPIGPQSIVPIDPGASSIVPLVEGGPDISFIAPDAGPGIGGEDIELFTFRDPATDVGGVSGGPTTISTEESETAIIDALPSATTPKQLFYDSYTQTILQTQVNPFLNNAISDTNVFVDPLFAGETIGDNIFEEIPLQNLNFSFPRESTPVKPGRGLRTPAQRSYSRFMEQYPIQAPEFLSQPSRLVQFEFENPAFDPDISIQFQRDVNSLEAAPNPAFADIAYLSRPHMSATSEGLVRVSRIGSRAVLQTRSGLTIGPKVHYYMDLSAISTEAIELQTFADSGHVHTIVDDFLSVTALDDPANIADINYTEDDLLDPLLENFNNSHITVQGVDEEGETVALPIPSITNSSKTFVTDIAENGLFANDTDSLLTPASTIVPAINWFPLFDSYSDFALDPFFIPRKKRRLDIL.

A Nuclear localization signal motif is present at residues 1–9 (MSLRRRKRA). A disulfide bridge connects residues cysteine 18 and cysteine 24. Residues 493 to 501 (PRKKRRLDI) carry the Nuclear localization signal motif.

This sequence belongs to the papillomaviridae L2 protein family. In terms of assembly, interacts with major capsid protein L1. Interacts with E2; this interaction inhibits E2 transcriptional activity but not the DNA replication function E2. Interacts with host GADD45GIP1. Interacts with host HSPA8; this interaction is required for L2 nuclear translocation. Interacts with host importins KPNB2 and KPNB3. Forms a complex with importin alpha2-beta1 heterodimers via interaction with the importin alpha2 adapter. Interacts with host DYNLT1; this interaction is essential for virus intracellular transport during entry. Interacts (via C-terminus) with host retromer subunits VPS35 and VPS29. Highly phosphorylated.

The protein localises to the virion. It is found in the host nucleus. Its subcellular location is the host early endosome. The protein resides in the host Golgi apparatus. In terms of biological role, minor protein of the capsid that localizes along the inner surface of the virion, within the central cavities beneath the L1 pentamers. Plays a role in capsid stabilization through interaction with the major capsid protein L1. Once the virion enters the host cell, L2 escorts the genomic DNA into the nucleus by promoting escape from the endosomal compartments and traffic through the host Golgi network. Mechanistically, the C-terminus of L2 possesses a cell-penetrating peptide that protudes from the host endosome, interacts with host cytoplasmic retromer cargo and thereby mediates the capsid delivery to the host trans-Golgi network. Plays a role through its interaction with host dynein in the intracellular microtubule-dependent transport of viral capsid toward the nucleus. Mediates the viral genome import into the nucleus through binding to host importins. Once within the nucleus, L2 localizes viral genomes to host PML bodies in order to activate early gene expression for establishment of infection. Later on, promotes late gene expression by interacting with the viral E2 protein and by inhibiting its transcriptional activation functions. During virion assembly, encapsidates the genome by direct interaction with the viral DNA. This Human papillomavirus type 48 protein is Minor capsid protein L2.